The chain runs to 708 residues: Leukotoxin translocation ATP-binding protein LktB (708 aa).

The Peptidase C39 domain maps to 1–126; the sequence is MEANHQRNDL…ACYQGQLILV (126 aa). The ABC transmembrane type-1 domain maps to 155-437; that stretch reads FLETLIVSIF…LAQLWQDFQQ (283 aa). The next 5 helical transmembrane spans lie at 159 to 179, 192 to 212, 270 to 290, 296 to 316, and 389 to 409; these read LIVS…FQVV, LNII…LSGL, ALTS…MWYY, LVIL…SPIL, and VMVI…LSIG. One can recognise an ABC transporter domain in the interval 469 to 704; the sequence is ISFKNIRFRY…SNGLYSYLHQ (236 aa). Residue 503-510 participates in ATP binding; that stretch reads GRSGSGKS.

This sequence belongs to the ABC transporter superfamily. Protein-1 exporter (TC 3.A.1.109) family. In terms of assembly, homodimer.

The protein resides in the cell inner membrane. The catalysed reaction is ATP + H2O + proteinSide 1 = ADP + phosphate + proteinSide 2.. Its function is as follows. Part of the ABC transporter complex LktBD involved in leukotoxin export. Transmembrane domains (TMD) form a pore in the inner membrane and the ATP-binding domain (NBD) is responsible for energy generation. The sequence is that of Leukotoxin translocation ATP-binding protein LktB (lktB) from Bibersteinia trehalosi (Pasteurella trehalosi).